Reading from the N-terminus, the 295-residue chain is Probable peptidyl-prolyl cis-trans isomerase B (295 aa).

Disordered stretches follow at residues 105-128 and 274-295; these read SADKAAKPVKPPRAGKVPTDPATV and IASGGDDGPPATEVTIESLRLD. A PPIase cyclophilin-type domain is found at 126-294; sequence ATVSASMATN…TEVTIESLRL (169 aa).

Belongs to the cyclophilin-type PPIase family.

The catalysed reaction is [protein]-peptidylproline (omega=180) = [protein]-peptidylproline (omega=0). Its function is as follows. PPIases accelerate the folding of proteins. It catalyzes the cis-trans isomerization of proline imidic peptide bonds in oligopeptides. The protein is Probable peptidyl-prolyl cis-trans isomerase B (ppiB) of Mycobacterium leprae (strain TN).